A 427-amino-acid polypeptide reads, in one-letter code: 3-phosphoshikimate 1-carboxyvinyltransferase (427 aa).

Positions 22, 23, and 27 each coordinate 3-phosphoshikimate. Phosphoenolpyruvate is bound at residue Lys22. Positions 97 and 125 each coordinate phosphoenolpyruvate. 3-phosphoshikimate contacts are provided by Ser171, Ser172, Gln173, Ser199, Asp315, Asn338, and Lys342. Gln173 is a phosphoenolpyruvate binding site. Asp315 (proton acceptor) is an active-site residue. Positions 346, 388, and 413 each coordinate phosphoenolpyruvate.

It belongs to the EPSP synthase family. As to quaternary structure, monomer.

The protein localises to the cytoplasm. The catalysed reaction is 3-phosphoshikimate + phosphoenolpyruvate = 5-O-(1-carboxyvinyl)-3-phosphoshikimate + phosphate. It participates in metabolic intermediate biosynthesis; chorismate biosynthesis; chorismate from D-erythrose 4-phosphate and phosphoenolpyruvate: step 6/7. Its function is as follows. Catalyzes the transfer of the enolpyruvyl moiety of phosphoenolpyruvate (PEP) to the 5-hydroxyl of shikimate-3-phosphate (S3P) to produce enolpyruvyl shikimate-3-phosphate and inorganic phosphate. This is 3-phosphoshikimate 1-carboxyvinyltransferase from Aliivibrio salmonicida (strain LFI1238) (Vibrio salmonicida (strain LFI1238)).